Reading from the N-terminus, the 238-residue chain is Demethylmenaquinone methyltransferase (238 aa).

S-adenosyl-L-methionine contacts are provided by residues Thr-65, Asp-85, and 109-110 (DA).

This sequence belongs to the class I-like SAM-binding methyltransferase superfamily. MenG/UbiE family.

It carries out the reaction a 2-demethylmenaquinol + S-adenosyl-L-methionine = a menaquinol + S-adenosyl-L-homocysteine + H(+). It participates in quinol/quinone metabolism; menaquinone biosynthesis; menaquinol from 1,4-dihydroxy-2-naphthoate: step 2/2. Its function is as follows. Methyltransferase required for the conversion of demethylmenaquinol (DMKH2) to menaquinol (MKH2). The chain is Demethylmenaquinone methyltransferase from Roseiflexus castenholzii (strain DSM 13941 / HLO8).